The primary structure comprises 248 residues: 2,3-bisphosphoglycerate-dependent phosphoglycerate mutase (248 aa).

Residues 8-15, 21-22, Arg-60, 87-90, Lys-98, 114-115, and 183-184 each bind substrate; these read RHGESTWN, TG, ERHY, RR, and GN. His-9 acts as the Tele-phosphohistidine intermediate in catalysis. Glu-87 (proton donor/acceptor) is an active-site residue.

The protein belongs to the phosphoglycerate mutase family. BPG-dependent PGAM subfamily. In terms of assembly, homodimer.

The catalysed reaction is (2R)-2-phosphoglycerate = (2R)-3-phosphoglycerate. It functions in the pathway carbohydrate degradation; glycolysis; pyruvate from D-glyceraldehyde 3-phosphate: step 3/5. Functionally, catalyzes the interconversion of 2-phosphoglycerate and 3-phosphoglycerate. This Burkholderia cenocepacia (strain ATCC BAA-245 / DSM 16553 / LMG 16656 / NCTC 13227 / J2315 / CF5610) (Burkholderia cepacia (strain J2315)) protein is 2,3-bisphosphoglycerate-dependent phosphoglycerate mutase.